A 376-amino-acid chain; its full sequence is Decapping nuclease RAI1 (376 aa).

Glu-168 serves as a coordination point for a divalent metal cation. 2 residues coordinate substrate: Cys-200 and Glu-217. A divalent metal cation is bound by residues Asp-219, Glu-237, and Leu-238. Substrate contacts are provided by Lys-239 and Gln-263.

Belongs to the DXO/Dom3Z family. As to quaternary structure, interacts with RAT1; the interaction is direct, stabilizes RAT1 protein structure and stimulates its exoribonuclease activity. The interaction also stimulates RAI1 pyrophosphohydrolase activity, probably by recruiting it to mRNA substrates. A divalent metal cation is required as a cofactor.

Its subcellular location is the nucleus. The catalysed reaction is a 5'-end NAD(+)-phospho-ribonucleoside in mRNA + H2O = a 5'-end phospho-ribonucleoside in mRNA + NAD(+) + H(+). The enzyme catalyses a 5'-end (N(7)-methyl 5'-triphosphoguanosine)-ribonucleoside-ribonucleotide in mRNA + H2O = a (N(7)-methyl 5'-triphosphoguanosine)-nucleoside + a 5'-end phospho-ribonucleoside in mRNA + H(+). It carries out the reaction a 5'-end triphospho-ribonucleoside in mRNA + H2O = a 5'-end phospho-ribonucleoside in mRNA + diphosphate + H(+). Decapping enzyme for NAD-capped RNAs: specifically hydrolyzes the nicotinamide adenine dinucleotide (NAD) cap from a subset of RNAs by removing the entire NAD moiety from the 5'-end of an NAD-capped RNA. The NAD-cap is present at the 5'-end of some RNAs and snoRNAs. In contrast to the canonical 5'-end N7 methylguanosine (m7G) cap, the NAD cap promotes mRNA decay. Also acts as a non-canonical decapping enzyme that removes the entire cap structure of m7G capped or incompletely capped RNAs. Has decapping activity toward incomplete 5'-end m7G cap mRNAs such as unmethylated 5'-end-capped RNA (cap0), while it has no activity toward 2'-O-ribose methylated m7G cap (cap1). Also possesses RNA 5'-pyrophosphohydrolase activity by hydrolyzing the 5'-end triphosphate to release pyrophosphates. Stimulates exoribonuclease activity of Rat1, allowing it to degrade RNAs with stable secondary structure more effectively. This chain is Decapping nuclease RAI1 (RAI1), found in Gibberella zeae (strain ATCC MYA-4620 / CBS 123657 / FGSC 9075 / NRRL 31084 / PH-1) (Wheat head blight fungus).